The sequence spans 214 residues: Adenylate kinase (214 aa).

An ATP-binding site is contributed by 15 to 20; the sequence is GAGKGT. Positions 35 to 64 are NMP; that stretch reads ASGDLFREAIKNQSVIGRKIAAIISQGGYV. Residues Ser-36, Arg-41, 62–64, 90–93, and Gln-97 each bind AMP; these read GYV and GYPR. Positions 127–164 are LID; it reads NRVICNNCNSVYNLLFQKPLVENSCDQCSAKLVKRSDD. Residue Arg-128 coordinates ATP. Zn(2+) is bound by residues Cys-131 and Cys-134. Position 137–138 (137–138) interacts with ATP; that stretch reads VY. Zn(2+)-binding residues include Cys-151 and Cys-154. AMP contacts are provided by Arg-161 and Arg-172. Leu-200 provides a ligand contact to ATP.

This sequence belongs to the adenylate kinase family. In terms of assembly, monomer.

It is found in the cytoplasm. It carries out the reaction AMP + ATP = 2 ADP. Its pathway is purine metabolism; AMP biosynthesis via salvage pathway; AMP from ADP: step 1/1. In terms of biological role, catalyzes the reversible transfer of the terminal phosphate group between ATP and AMP. Plays an important role in cellular energy homeostasis and in adenine nucleotide metabolism. This Mycoplasma genitalium (strain ATCC 33530 / DSM 19775 / NCTC 10195 / G37) (Mycoplasmoides genitalium) protein is Adenylate kinase.